Reading from the N-terminus, the 278-residue chain is Elongation factor Ts (278 aa).

Residues T82–V85 form an involved in Mg(2+) ion dislocation from EF-Tu region.

This sequence belongs to the EF-Ts family.

It localises to the cytoplasm. Functionally, associates with the EF-Tu.GDP complex and induces the exchange of GDP to GTP. It remains bound to the aminoacyl-tRNA.EF-Tu.GTP complex up to the GTP hydrolysis stage on the ribosome. The polypeptide is Elongation factor Ts (Cytophaga hutchinsonii (strain ATCC 33406 / DSM 1761 / CIP 103989 / NBRC 15051 / NCIMB 9469 / D465)).